A 192-amino-acid chain; its full sequence is Small ribosomal subunit protein uS4B (192 aa).

Residues 83–145 (RRLDNLVYRL…SRKIQTYASN (63 aa)) form the S4 RNA-binding domain.

This sequence belongs to the universal ribosomal protein uS4 family. In terms of assembly, part of the 30S ribosomal subunit. Contacts protein S5. The interaction surface between S4 and S5 is involved in control of translational fidelity.

Its function is as follows. One of the primary rRNA binding proteins, it binds directly to 16S rRNA where it nucleates assembly of the body of the 30S subunit. Functionally, with S5 and S12 plays an important role in translational accuracy. This is Small ribosomal subunit protein uS4B (rpsD2) from Clostridium acetobutylicum (strain ATCC 824 / DSM 792 / JCM 1419 / IAM 19013 / LMG 5710 / NBRC 13948 / NRRL B-527 / VKM B-1787 / 2291 / W).